We begin with the raw amino-acid sequence, 500 residues long: Carnosic acid synthase (500 aa).

Residues 4-24 (LILLSLAFLASCVVAYSRRRP) traverse the membrane as a helical segment. A heme-binding site is contributed by Cys443.

Belongs to the cytochrome P450 family. Heme is required as a cofactor. Mostly expressed in young leaves, particularly in glandular trichomes.

The protein localises to the membrane. The enzyme catalyses 11-hydroxyferruginol + 3 reduced [NADPH--hemoprotein reductase] + 3 O2 = carnosate + 3 oxidized [NADPH--hemoprotein reductase] + 4 H2O + 4 H(+). It catalyses the reaction miltiradiene + 2 reduced [NADPH--hemoprotein reductase] + 2 O2 = miltiradien-20-al + 2 oxidized [NADPH--hemoprotein reductase] + 3 H2O + 2 H(+). It carries out the reaction ferruginol + 3 reduced [NADPH--hemoprotein reductase] + 3 O2 = pisiferate + 3 oxidized [NADPH--hemoprotein reductase] + 4 H2O + 4 H(+). Its pathway is secondary metabolite biosynthesis; terpenoid biosynthesis. Functionally, monooxygenase involved in the biosynthesis of carnosate, a potent antioxidant labdane-related diterpene natural product. Catalyzes the oxidation of 11-hydroxyferruginol to produce carnosate. Mediates the conversion of miltiradien into miltiradien-20-al. Also involved in the production of pisiferic acid and derivative products from ferruginol. In Salvia fruticosa (Greek sage), this protein is Carnosic acid synthase.